The following is a 380-amino-acid chain: Probable tRNA sulfurtransferase (380 aa).

The region spanning 58–162 (EEVIERLKKV…MAFVYAGVIE (105 aa)) is the THUMP domain. ATP contacts are provided by residues 178 to 179 (LL), 203 to 204 (YF), Arg260, Gly282, and Gln291.

It belongs to the ThiI family.

It localises to the cytoplasm. It carries out the reaction [ThiI sulfur-carrier protein]-S-sulfanyl-L-cysteine + a uridine in tRNA + 2 reduced [2Fe-2S]-[ferredoxin] + ATP + H(+) = [ThiI sulfur-carrier protein]-L-cysteine + a 4-thiouridine in tRNA + 2 oxidized [2Fe-2S]-[ferredoxin] + AMP + diphosphate. The enzyme catalyses [ThiS sulfur-carrier protein]-C-terminal Gly-Gly-AMP + S-sulfanyl-L-cysteinyl-[cysteine desulfurase] + AH2 = [ThiS sulfur-carrier protein]-C-terminal-Gly-aminoethanethioate + L-cysteinyl-[cysteine desulfurase] + A + AMP + 2 H(+). It functions in the pathway cofactor biosynthesis; thiamine diphosphate biosynthesis. Catalyzes the ATP-dependent transfer of a sulfur to tRNA to produce 4-thiouridine in position 8 of tRNAs, which functions as a near-UV photosensor. Also catalyzes the transfer of sulfur to the sulfur carrier protein ThiS, forming ThiS-thiocarboxylate. This is a step in the synthesis of thiazole, in the thiamine biosynthesis pathway. The sulfur is donated as persulfide by IscS. The chain is Probable tRNA sulfurtransferase from Thermoanaerobacter pseudethanolicus (strain ATCC 33223 / 39E) (Clostridium thermohydrosulfuricum).